The primary structure comprises 351 residues: Very-long-chain 3-oxoacyl-CoA reductase (351 aa).

A helical membrane pass occupies residues Leu26–Ile46. NADP(+) contacts are provided by Leu72, Asp126, Asn153, Tyr225, Lys229, Val258, and Ser260. Tyr225 (proton donor) is an active-site residue. Residue Lys229 is the Lowers pKa of active site Tyr of the active site.

It belongs to the short-chain dehydrogenases/reductases (SDR) family.

It is found in the endoplasmic reticulum membrane. The catalysed reaction is a very-long-chain (3R)-3-hydroxyacyl-CoA + NADP(+) = a very-long-chain 3-oxoacyl-CoA + NADPH + H(+). The protein operates within lipid metabolism; fatty acid biosynthesis. Its function is as follows. Component of the microsomal membrane bound fatty acid elongation system, which produces the 26-carbon very long-chain fatty acids (VLCFA) from palmitate. Catalyzes the reduction of the 3-ketoacyl-CoA intermediate that is formed in each cycle of fatty acid elongation. VLCFAs serve as precursors for ceramide and sphingolipids. The protein is Very-long-chain 3-oxoacyl-CoA reductase of Eremothecium gossypii (strain ATCC 10895 / CBS 109.51 / FGSC 9923 / NRRL Y-1056) (Yeast).